Reading from the N-terminus, the 496-residue chain is MAVAAPRKTEYEAIIGLETHCQLNTASKIFCHCSTKFDSDPNSNVCPVCLGYPGVLPVLNEKVLESAVKMGLALKAKISPYSKFDRKQYFYPDLPKNYQISQFDLPIVEHGHLEIEIADKPSDPPVKKTIGVTRLHMEEDAGKLVHAGSDRLAGSTYSKVDFNRTGIPLLEIVSEPDIRSGKEAAEYAQELRRLVRYLGIGDGNMQEGSLRCDVNISIRPVGQEEFGTKVEIKNMNSFSAIQKAIDYEIERQIKAVETGEPIYQETRLWDESSQRTFSMRKKEGSSDYRYFPEPDLPPIEVTPAQLEKWAAELPETPAQKRERYETEYGLSSYDTRVLTDDRDVAEYFEAAVAAGADPKQVTNWVTQDIAAHLNKNVGLTIVELPLKATQLAELVNLIHDGTISGKIAKEILPELLEQGGSPKAIVESRGLTQISDTGALEAMVDEVLAANPEKVEQFRAGKTKLQGFFVGQLMKKTSGRADPKLLNQILAQKLRG.

The protein belongs to the GatB/GatE family. GatB subfamily. Heterotrimer of A, B and C subunits.

It carries out the reaction L-glutamyl-tRNA(Gln) + L-glutamine + ATP + H2O = L-glutaminyl-tRNA(Gln) + L-glutamate + ADP + phosphate + H(+). It catalyses the reaction L-aspartyl-tRNA(Asn) + L-glutamine + ATP + H2O = L-asparaginyl-tRNA(Asn) + L-glutamate + ADP + phosphate + 2 H(+). In terms of biological role, allows the formation of correctly charged Asn-tRNA(Asn) or Gln-tRNA(Gln) through the transamidation of misacylated Asp-tRNA(Asn) or Glu-tRNA(Gln) in organisms which lack either or both of asparaginyl-tRNA or glutaminyl-tRNA synthetases. The reaction takes place in the presence of glutamine and ATP through an activated phospho-Asp-tRNA(Asn) or phospho-Glu-tRNA(Gln). The polypeptide is Aspartyl/glutamyl-tRNA(Asn/Gln) amidotransferase subunit B (Picosynechococcus sp. (strain ATCC 27264 / PCC 7002 / PR-6) (Agmenellum quadruplicatum)).